The sequence spans 587 residues: Prolycopene isomerase 1, chloroplastic (587 aa).

Residues 1–13 (MLCLSLNSSSTSP) show a composition bias toward low complexity. The disordered stretch occupies residues 1 to 21 (MLCLSLNSSSTSPPKSPLHHS). A chloroplast-targeting transit peptide spans 1–50 (MLCLSLNSSSTSPPKSPLHHSFSRRSMRSWVCSPRVQRKKLGFWSSPKAV).

This sequence belongs to the carotenoid/retinoid oxidoreductase family. CrtISO subfamily. NAD(+) serves as cofactor. NADP(+) is required as a cofactor. The cofactor is FAD. Up-regulated in the flower buds and flower lip tissue, while it is weakly expressed in leaves.

Its subcellular location is the plastid. It is found in the chloroplast membrane. It carries out the reaction 7,7',9,9'-tetra-cis-lycopene = all-trans-lycopene. Its pathway is carotenoid biosynthesis; lycopene biosynthesis. In terms of biological role, carotene cis-trans-isomerase that converts 7,9,9'-tri-cis-neurosporene to 9'-cis-neurosporene and 7,9,9',7'-tetra-cis-lycopene (also known as prolycopene) into all-trans-lycopene. Isomerization requires redox-active components, suggesting that isomerization is achieved by a reversible redox reaction acting at specific double bonds. Isomerizes adjacent cis-double bonds at C7 and C9 pairwise into the trans-configuration, but is incapable of isomerizing single cis-double bonds at C9 and C9'. This is Prolycopene isomerase 1, chloroplastic (CRTISO1) from Oncidium hybrid cultivar (Orchid).